The chain runs to 139 residues: Putative pre-16S rRNA nuclease (139 aa).

The protein belongs to the YqgF nuclease family.

Its subcellular location is the cytoplasm. In terms of biological role, could be a nuclease involved in processing of the 5'-end of pre-16S rRNA. The chain is Putative pre-16S rRNA nuclease from Pectobacterium atrosepticum (strain SCRI 1043 / ATCC BAA-672) (Erwinia carotovora subsp. atroseptica).